The sequence spans 444 residues: UDP-N-acetylmuramate--L-alanine ligase (444 aa).

ATP is bound at residue 111–117 (GAHGKTS).

The protein belongs to the MurCDEF family.

It localises to the cytoplasm. The enzyme catalyses UDP-N-acetyl-alpha-D-muramate + L-alanine + ATP = UDP-N-acetyl-alpha-D-muramoyl-L-alanine + ADP + phosphate + H(+). It functions in the pathway cell wall biogenesis; peptidoglycan biosynthesis. In terms of biological role, cell wall formation. The protein is UDP-N-acetylmuramate--L-alanine ligase of Leuconostoc mesenteroides subsp. mesenteroides (strain ATCC 8293 / DSM 20343 / BCRC 11652 / CCM 1803 / JCM 6124 / NCDO 523 / NBRC 100496 / NCIMB 8023 / NCTC 12954 / NRRL B-1118 / 37Y).